The primary structure comprises 417 residues: UPF0761 membrane protein Veis_3782 (417 aa).

The next 6 membrane-spanning stretches (helical) occupy residues 54–74, 111–131, 151–171, 192–212, 226–246, and 261–281; these read ILALVPFFTVALAVFTAFPIF, GLGLAGFSVLLVTALALILTI, VLIYWAAITLGPLLLGASLAL, FLFDSLQFMVLAAGMALLYHY, GGLFVALCIELAKKALALYLG, and LPILLVWIYMAWVIVLLGAVV.

This sequence belongs to the UPF0761 family.

Its subcellular location is the cell inner membrane. The chain is UPF0761 membrane protein Veis_3782 from Verminephrobacter eiseniae (strain EF01-2).